The chain runs to 164 residues: Cytochrome c-type biogenesis protein CcmE (164 aa).

Over 1 to 8 (MNPRRKKR) the chain is Cytoplasmic. The helical; Signal-anchor for type II membrane protein transmembrane segment at 9–29 (LTLAVALIGGVAAIASLLLYA) threads the bilayer. At 30–164 (LNSNLNLFFT…EDQSKAGGYK (135 aa)) the chain is on the periplasmic side. The heme site is built by His-131 and Tyr-135. The tract at residues 140-164 (VAEAMGQSHEKLDYSEDQSKAGGYK) is disordered. A compositionally biased stretch (basic and acidic residues) spans 147 to 158 (SHEKLDYSEDQS).

Belongs to the CcmE/CycJ family.

Its subcellular location is the cell inner membrane. Heme chaperone required for the biogenesis of c-type cytochromes. Transiently binds heme delivered by CcmC and transfers the heme to apo-cytochromes in a process facilitated by CcmF and CcmH. The protein is Cytochrome c-type biogenesis protein CcmE of Shewanella piezotolerans (strain WP3 / JCM 13877).